The sequence spans 515 residues: uncharacterized protein (515 aa).

The tract at residues serine 146–glutamine 171 is disordered. Over residues glutamate 148–asparagine 162 the composition is skewed to basic and acidic residues.

It is found in the cytoplasm. Its subcellular location is the nucleus. This is an uncharacterized protein from Schizosaccharomyces pombe (strain 972 / ATCC 24843) (Fission yeast).